The following is a 467-amino-acid chain: UDP-N-acetylmuramoylalanine--D-glutamate ligase (467 aa).

Position 118 to 124 (118 to 124 (GTNGKTT)) interacts with ATP.

Belongs to the MurCDEF family.

The protein localises to the cytoplasm. It carries out the reaction UDP-N-acetyl-alpha-D-muramoyl-L-alanine + D-glutamate + ATP = UDP-N-acetyl-alpha-D-muramoyl-L-alanyl-D-glutamate + ADP + phosphate + H(+). It participates in cell wall biogenesis; peptidoglycan biosynthesis. Functionally, cell wall formation. Catalyzes the addition of glutamate to the nucleotide precursor UDP-N-acetylmuramoyl-L-alanine (UMA). This chain is UDP-N-acetylmuramoylalanine--D-glutamate ligase, found in Streptomyces avermitilis (strain ATCC 31267 / DSM 46492 / JCM 5070 / NBRC 14893 / NCIMB 12804 / NRRL 8165 / MA-4680).